Consider the following 194-residue polypeptide: Fe/S biogenesis protein NfuA (194 aa).

Residues Cys-152 and Cys-155 each contribute to the [4Fe-4S] cluster site.

It belongs to the NfuA family. In terms of assembly, homodimer. The cofactor is [4Fe-4S] cluster.

Functionally, involved in iron-sulfur cluster biogenesis. Binds a 4Fe-4S cluster, can transfer this cluster to apoproteins, and thereby intervenes in the maturation of Fe/S proteins. Could also act as a scaffold/chaperone for damaged Fe/S proteins. The protein is Fe/S biogenesis protein NfuA of Ectopseudomonas mendocina (strain ymp) (Pseudomonas mendocina).